We begin with the raw amino-acid sequence, 349 residues long: GDP-mannose:glycolipid 4-beta-D-mannosyltransferase (349 aa).

An N-terminal signal peptide occupies residues 1-14; it reads MSASASLPVTRAAA.

This sequence belongs to the glycosyltransferase 94 family.

Its subcellular location is the cell inner membrane. It catalyses the reaction beta-D-GlcA-(1-&gt;2)-alpha-D-Man-(1-&gt;3)-beta-D-Glc-(1-&gt;4)-alpha-D-Glc-di-trans,octa-cis-undecaprenyl diphosphate + GDP-alpha-D-mannose = beta-D-Man-(1-&gt;4)-beta-D-GlcA-(1-&gt;2)-alpha-D-Man-(1-&gt;3)-beta-D-Glc-(1-&gt;4)-alpha-D-Glc-di-trans,octa-cis-undecaprenyl diphosphate + GDP + H(+). Its pathway is glycan biosynthesis; xanthan biosynthesis. In terms of biological role, nonprocessive beta-mannosyltransferase that catalyzes the transfer of a mannose residue from GDP-mannose to glucuronic acid-beta-1,2-mannose-alpha-1,3-glucose-beta-1,4-glucose-PP-polyisoprenyl to form the lipid-linked pentasaccharide repeating unit of xanthan, Man-GlcA-Man-Glc(2)-PP-Pol. Is involved in the biosynthesis of the exopolysaccharide xanthan. This is GDP-mannose:glycolipid 4-beta-D-mannosyltransferase (gumI) from Xanthomonas campestris pv. campestris (strain ATCC 33913 / DSM 3586 / NCPPB 528 / LMG 568 / P 25).